The sequence spans 334 residues: Holliday junction branch migration complex subunit RuvB (334 aa).

The interval 4–186 (ADRLIAPISN…FGIVQRLEYY (183 aa)) is large ATPase domain (RuvB-L). ATP-binding positions include I25, R26, G67, K70, T71, T72, 133–135 (EDY), R176, Y186, and R223. T71 contributes to the Mg(2+) binding site. The segment at 187–257 (KVADLQHIVQ…TADRALNMLD (71 aa)) is small ATPAse domain (RuvB-S). Positions 260-334 (HQGFDYMDRK…RAYLHFGIEK (75 aa)) are head domain (RuvB-H). Positions 315 and 320 each coordinate DNA.

Belongs to the RuvB family. Homohexamer. Forms an RuvA(8)-RuvB(12)-Holliday junction (HJ) complex. HJ DNA is sandwiched between 2 RuvA tetramers; dsDNA enters through RuvA and exits via RuvB. An RuvB hexamer assembles on each DNA strand where it exits the tetramer. Each RuvB hexamer is contacted by two RuvA subunits (via domain III) on 2 adjacent RuvB subunits; this complex drives branch migration. In the full resolvosome a probable DNA-RuvA(4)-RuvB(12)-RuvC(2) complex forms which resolves the HJ.

The protein resides in the cytoplasm. It catalyses the reaction ATP + H2O = ADP + phosphate + H(+). In terms of biological role, the RuvA-RuvB-RuvC complex processes Holliday junction (HJ) DNA during genetic recombination and DNA repair, while the RuvA-RuvB complex plays an important role in the rescue of blocked DNA replication forks via replication fork reversal (RFR). RuvA specifically binds to HJ cruciform DNA, conferring on it an open structure. The RuvB hexamer acts as an ATP-dependent pump, pulling dsDNA into and through the RuvAB complex. RuvB forms 2 homohexamers on either side of HJ DNA bound by 1 or 2 RuvA tetramers; 4 subunits per hexamer contact DNA at a time. Coordinated motions by a converter formed by DNA-disengaged RuvB subunits stimulates ATP hydrolysis and nucleotide exchange. Immobilization of the converter enables RuvB to convert the ATP-contained energy into a lever motion, pulling 2 nucleotides of DNA out of the RuvA tetramer per ATP hydrolyzed, thus driving DNA branch migration. The RuvB motors rotate together with the DNA substrate, which together with the progressing nucleotide cycle form the mechanistic basis for DNA recombination by continuous HJ branch migration. Branch migration allows RuvC to scan DNA until it finds its consensus sequence, where it cleaves and resolves cruciform DNA. This is Holliday junction branch migration complex subunit RuvB from Vibrio cholerae serotype O1 (strain ATCC 39315 / El Tor Inaba N16961).